Reading from the N-terminus, the 821-residue chain is ATP-dependent Clp protease ATP-binding subunit ClpA homolog (821 aa).

Positions 2–144 constitute a Clp R domain; that stretch reads FERFTEKAIK…RAEVIQMLGE (143 aa). Repeat regions lie at residues 5-70 and 80-144; these read FTEK…IGRG and FTPR…MLGE. ATP is bound by residues 210–217 and 549–556; these read GEPGVGKT and GPTGVGKT.

It belongs to the ClpA/ClpB family.

The protein resides in the plastid. It is found in the chloroplast. May interact with a ClpP-like protease involved in degradation of denatured proteins in the chloroplast. The sequence is that of ATP-dependent Clp protease ATP-binding subunit ClpA homolog (clpC) from Porphyra purpurea (Red seaweed).